We begin with the raw amino-acid sequence, 349 residues long: Ferredoxin--NADP reductase 1 (349 aa).

Positions 36, 44, 48, 88, 123, 290, and 331 each coordinate FAD.

It belongs to the ferredoxin--NADP reductase type 2 family. In terms of assembly, homodimer. FAD is required as a cofactor.

It carries out the reaction 2 reduced [2Fe-2S]-[ferredoxin] + NADP(+) + H(+) = 2 oxidized [2Fe-2S]-[ferredoxin] + NADPH. The sequence is that of Ferredoxin--NADP reductase 1 from Lysinibacillus sphaericus (strain C3-41).